A 598-amino-acid chain; its full sequence is UvrABC system protein C (598 aa).

One can recognise a GIY-YIG domain in the interval 14–91 (DSPGCYLHKD…IQKNMPKYNI (78 aa)). The UVR domain occupies 196–231 (DKIIEDLRSKMLAASEEMAFERAAEYRDLISGIATM).

Belongs to the UvrC family. As to quaternary structure, interacts with UvrB in an incision complex.

Its subcellular location is the cytoplasm. Its function is as follows. The UvrABC repair system catalyzes the recognition and processing of DNA lesions. UvrC both incises the 5' and 3' sides of the lesion. The N-terminal half is responsible for the 3' incision and the C-terminal half is responsible for the 5' incision. In Streptococcus pyogenes serotype M3 (strain ATCC BAA-595 / MGAS315), this protein is UvrABC system protein C.